The chain runs to 1017 residues: Formin-binding protein 4 (1017 aa).

2 disordered regions span residues 1–141 (MGKK…STDI) and 160–202 (PAAP…TSGW). Serine 18 carries the phosphoserine modification. Low complexity predominate over residues 40-69 (DSTAAVPSQPAPSAATTTTTAVTAAAASDD). A phosphoserine mark is found at serine 116 and serine 124. Residues 130-141 (SKETNGNQSTDI) show a composition bias toward polar residues. Phosphothreonine is present on threonine 172. A compositionally biased stretch (low complexity) spans 181-200 (AATSTLSSSTSNGTDSTQTS). The WW 1 domain occupies 214 to 248 (GIEMGDWQEVWDENTGCYYYWNTQTNEVTWELPQY). An N6-acetyllysine modification is found at lysine 290. Lysine 301 is covalently cross-linked (Glycyl lysine isopeptide (Lys-Gly) (interchain with G-Cter in SUMO1)). A Glycyl lysine isopeptide (Lys-Gly) (interchain with G-Cter in SUMO2) cross-link involves residue lysine 335. Residue lysine 348 forms a Glycyl lysine isopeptide (Lys-Gly) (interchain with G-Cter in SUMO1); alternate linkage. Lysine 348 participates in a covalent cross-link: Glycyl lysine isopeptide (Lys-Gly) (interchain with G-Cter in SUMO2); alternate. Disordered regions lie at residues 421-519 (LEEG…TTPK), 621-676 (ESQW…CKES), 706-792 (PLPL…IKRK), and 899-994 (TATI…AERN). 5 positions are modified to phosphoserine: serine 427, serine 432, serine 435, serine 438, and serine 442. Over residues 428–442 (VSGSSPRSDISQPAS) the composition is skewed to polar residues. Residues 449 to 458 (LMSKRGKWKM) are compositionally biased toward basic residues. The segment covering 461–474 (RATSPESTSRSSSK) has biased composition (low complexity). Serine 464 bears the Phosphoserine mark. Threonine 479 carries the phosphothreonine modification. Basic and acidic residues predominate over residues 491-513 (NSEKIDENSDKEMEVEESPEKIK). Residues serine 499 and serine 508 each carry the phosphoserine modification. Threonine 516 and threonine 517 each carry phosphothreonine. Residue lysine 519 forms a Glycyl lysine isopeptide (Lys-Gly) (interchain with G-Cter in SUMO1); alternate linkage. Residue lysine 519 forms a Glycyl lysine isopeptide (Lys-Gly) (interchain with G-Cter in SUMO2); alternate linkage. One can recognise a WW 2 domain in the interval 595–629 (NATPKGWSCHWDRDHRRYFYVNEQSGESQWEFPDG). Positions 627–637 (PDGEEEEEESQ) are enriched in acidic residues. Residues 640-656 (ENRDETLAKQTLKDKTG) show a composition bias toward basic and acidic residues. A compositionally biased stretch (low complexity) spans 657-671 (TDSNSTESSETSTGS). The span at 706–732 (PLPLEMPPPPPPPPESPPPPPPPPPPA) shows a compositional bias: pro residues. Residues 733 to 748 (EDGEIQEVEMEDEGSE) are compositionally biased toward acidic residues. Over residues 764-786 (SAQTTVVTSQSSVDSTISSSSST) the composition is skewed to low complexity. Pro residues predominate over residues 904–925 (EPPPPPPPPPPPPPPAPKMPPP). The span at 929 to 941 (KKGRKDKAKKSKT) shows a compositional bias: basic residues. Residues 957 to 970 (LDEEDNSSSSEEDR) are compositionally biased toward acidic residues. Residues serine 963, serine 964, and serine 965 each carry the phosphoserine modification. Basic and acidic residues predominate over residues 971-982 (ESTAQKRIEEWK).

In terms of assembly, binds FMN1. Interacts with the Arg/Gly-rich-flanked Pro-rich of KHDRBS1/SAM68. Arginine methylation in these regions has no effect on this binding. In terms of tissue distribution, highly expressed in the eye.

The polypeptide is Formin-binding protein 4 (FNBP4) (Homo sapiens (Human)).